The following is a 523-amino-acid chain: Apolipoprotein N-acyltransferase (523 aa).

Transmembrane regions (helical) follow at residues 26 to 46 (LRFA…AFAP), 49 to 66 (WWWL…LVRQ), 74 to 94 (AWVG…WLYI), 109 to 129 (AAVL…AWLW), 137 to 157 (QLSG…SEWL), 185 to 205 (LVGV…LCAA), and 212 to 232 (WLAG…HTIA). Positions 246–487 (LQGNVPQDVK…LGTLQADVQG (242 aa)) constitute a CN hydrolase domain. Glutamate 284 serves as the catalytic Proton acceptor. Lysine 345 is a catalytic residue. The active-site Nucleophile is the cysteine 395. The chain crosses the membrane as a helical span at residues 494–514 (FVRTGNAPALGAGVLVLLAAL).

This sequence belongs to the CN hydrolase family. Apolipoprotein N-acyltransferase subfamily.

The protein resides in the cell inner membrane. It carries out the reaction N-terminal S-1,2-diacyl-sn-glyceryl-L-cysteinyl-[lipoprotein] + a glycerophospholipid = N-acyl-S-1,2-diacyl-sn-glyceryl-L-cysteinyl-[lipoprotein] + a 2-acyl-sn-glycero-3-phospholipid + H(+). The protein operates within protein modification; lipoprotein biosynthesis (N-acyl transfer). In terms of biological role, catalyzes the phospholipid dependent N-acylation of the N-terminal cysteine of apolipoprotein, the last step in lipoprotein maturation. In Ralstonia nicotianae (strain ATCC BAA-1114 / GMI1000) (Ralstonia solanacearum), this protein is Apolipoprotein N-acyltransferase.